Consider the following 156-residue polypeptide: MECSINNQQADYPVGEELLSTLNRVLQAAAAAEGVAGEAEVSLTLVDDAAIKELNRTYRGVDAPTDVLSFALEEKGPDEPAYADPGGDKLLGDIIISVPTAVRQAGEYGHSLARELAFLAVHGFLHLLGYDHDTAAGAADMEARQEAILAGVGLRR.

Zn(2+) contacts are provided by H122, H126, and H132.

It belongs to the endoribonuclease YbeY family. The cofactor is Zn(2+).

The protein resides in the cytoplasm. Its function is as follows. Single strand-specific metallo-endoribonuclease involved in late-stage 70S ribosome quality control and in maturation of the 3' terminus of the 16S rRNA. The sequence is that of Endoribonuclease YbeY from Moorella thermoacetica (strain ATCC 39073 / JCM 9320).